Here is a 128-residue protein sequence, read N- to C-terminus: UPF0325 protein NT01EI_0832 (128 aa).

This sequence belongs to the UPF0325 family.

This Edwardsiella ictaluri (strain 93-146) protein is UPF0325 protein NT01EI_0832.